The following is a 251-amino-acid chain: Plant UBX domain-containing protein 1 (251 aa).

M1 is modified (N-acetylmethionine). The UBX domain maps to 104-180; the sequence is SKLTKAVIRV…GFVPGAIVYF (77 aa). Positions 212–251 are disordered; it reads AVEPVESSSEPATVDSSAVPVEHERKSTEKKTTKPKWFKM. Residues 217-227 show a composition bias toward polar residues; it reads ESSSEPATVDS. Residues 232–243 show a composition bias toward basic and acidic residues; that stretch reads VEHERKSTEKKT.

In terms of assembly, interacts with CDC48A (non-hexameric) via its UBX-containing C-terminal domain.

The protein resides in the cytoplasm. Regulates CDC48A by inhibiting its ATPase activity and by promoting the disassembly of the active hexamer. The chain is Plant UBX domain-containing protein 1 from Arabidopsis thaliana (Mouse-ear cress).